The primary structure comprises 495 residues: MARAAPLLAVLATVLTTAAAGGDAPPGKIAVIGAGIGGSAVAHFLQQHFGPRVQIVVYEKGTVGGRLATISVNKQNYESGAASFHSLSLHMQDFVKLLGLRQRREVVGRSAIFGGEHFVLEETDWYLLNLFRLWWYYGISFLRLQMWVEEVMEKFMRIYKYQAHGYAFSGVEELLYSLGEATFVNMTQRSVAESLLQVGVTQRFIDDVVSAVLRASYGQSASMPAFAGAMSLAGAQGNLWSVEGGNKLVCSGLLKLAKATVIHATVTSVTLHSTEGKALYQVAYESDKGNSSDFYDIVVIATPLHLDNSSNNNITFEGFTPPIEDIQGSFQPTVVSLVHGYLNSSYFGFPDPKLFPFANILTTDFPSFFCTLDNICPVNISASFRRKQPQEAAVWRVQSPKPLFRTELKTLFRSYYSVQTAEWQAHPLYGSRRTLPRFALHDQLFYLNALEWAASSVEVTAVAAKNVALLAYNRWYQDLDKIDQKDLIHKVKTEL.

Positions 1-22 (MARAAPLLAVLATVLTTAAAGG) are cleaved as a signal peptide. N-linked (GlcNAc...) asparagine glycosylation is found at Asn185 and Asn343.

This sequence belongs to the prenylcysteine oxidase family. Requires FAD as cofactor.

Its subcellular location is the secreted. Functionally, likely to have oxidoreductase activity. Required in the mevalonate pathway to regulate prenylation and enhances the bactericidal activity of neutrophils. The chain is Prenylcysteine oxidase 1-like (Pcyox1l) from Mus musculus (Mouse).